Here is a 515-residue protein sequence, read N- to C-terminus: Nectin-1 (515 aa).

An N-terminal signal peptide occupies residues 1–30 (MARMGLAGAAGRWWGLALGLTAFFLPGAHT). Positions 31–141 (QVVQVNDSMY…GNRESQLNLT (111 aa)) constitute an Ig-like V-type domain. The Extracellular portion of the chain corresponds to 31 to 355 (QVVQVNDSMY…GRRAGQVPTA (325 aa)). Asn-36, Asn-72, Asn-139, Asn-202, Asn-286, Asn-297, Asn-307, and Asn-332 each carry an N-linked (GlcNAc...) asparagine glycan. An intrachain disulfide couples Cys-51 to Cys-124. 2 consecutive Ig-like C2-type domains span residues 145 to 243 (KPTN…TLNV) and 247 to 334 (PEVT…VNIT). 2 disulfides stabilise this stretch: Cys-172–Cys-226 and Cys-269–Cys-316. Positions 282-299 (WTTLNGSLPKGVEAQNRT) are interaction with FGFR. Residues 356–376 (IIGGVVGSILLVLFVVGGIVV) traverse the membrane as a helical segment. Residues 377–515 (ALCRRRHTFK…SFISKKEWYV (139 aa)) are Cytoplasmic-facing. A disordered region spans residues 400–486 (YSKAGIPQHH…DGYGDRTLGY (87 aa)). Phosphoserine occurs at positions 422, 434, and 435. Tyr-436 carries the phosphotyrosine modification. Over residues 436–445 (YEEEEEEEGG) the composition is skewed to acidic residues. Over residues 446-464 (GGERKVGGPHPKYDEDAKR) the composition is skewed to basic and acidic residues. Position 509 is a phosphoserine (Ser-509).

Belongs to the nectin family. (Microbial infection) Interacts with herpes pseudorabies virus/PRV envelope glycoprotein D.

It is found in the cell membrane. The protein localises to the cell junction. The protein resides in the adherens junction. It localises to the presynaptic cell membrane. Functionally, (Microbial infection) Acts as a receptor for herpes simplex virus 1/HHV-1, herpes simplex virus 2/HHV-2, and pseudorabies virus/PRV. This Sus scrofa (Pig) protein is Nectin-1.